We begin with the raw amino-acid sequence, 440 residues long: RUN domain-containing protein 3A (440 aa).

The 133-residue stretch at 52–184 folds into the RUN domain; the sequence is DDSSEEFVNF…IDFSFCLKGE (133 aa). The tract at residues 213–233 is disordered; the sequence is DDRESVGGSSSEDSSPEHPYL. Residues 262 to 317 adopt a coiled-coil conformation; it reads YLEELVRLRETQLKNLEAENKRLTQRISEQAEQSLQEKHQLEGVILELQEQLTGLL. Residues 374-402 are disordered; it reads LSSESQRLDGKQDGEPWGPIGKDPTPSML.

This sequence belongs to the RUNDC3 family.

This chain is RUN domain-containing protein 3A (rundc3a), found in Xenopus tropicalis (Western clawed frog).